The sequence spans 482 residues: Wax ester synthase/diacylglycerol acyltransferase 9 (482 aa).

At 1-195 (MEKKMKEEEE…FRLVLVVCST (195 aa)) the chain is on the cytoplasmic side. Histidine 140 serves as the catalytic Proton acceptor. A helical membrane pass occupies residues 196 to 216 (VRLIWNTLVDSFLCMATIFFL). The Lumenal portion of the chain corresponds to 217–328 (KDTDTPLKGK…AKGSKCRWGN (112 aa)). A helical transmembrane segment spans residues 329 to 349 (YISVILFPFTIALQSDPLVYL). Topologically, residues 350–366 (SNVKSMIDRKKNSLITY) are cytoplasmic. Residues 367 to 387 (IIYTFSEFVIKAFGINVAVAF) traverse the membrane as a helical segment. Topologically, residues 388–482 (QRKIMLNTTM…LEKGLPNHVN (95 aa)) are lumenal. An N-linked (GlcNAc...) asparagine glycan is attached at asparagine 394.

In the N-terminal section; belongs to the long-chain O-acyltransferase family. In terms of tissue distribution, mostly expressed in stems and siliques.

The protein localises to the cell membrane. It is found in the endoplasmic reticulum membrane. The enzyme catalyses an acyl-CoA + a 1,2-diacyl-sn-glycerol = a triacyl-sn-glycerol + CoA. It carries out the reaction a long chain fatty alcohol + a fatty acyl-CoA = a wax ester + CoA. Its pathway is glycerolipid metabolism; triacylglycerol biosynthesis. It functions in the pathway lipid metabolism. Bifunctional wax ester synthase/diacylglycerol acyltransferase. Involved in cuticular wax biosynthesis. The polypeptide is Wax ester synthase/diacylglycerol acyltransferase 9 (Arabidopsis thaliana (Mouse-ear cress)).